The chain runs to 627 residues: (R)-linalool synthase 1, chloroplastic (627 aa).

The transit peptide at 1 to 21 (MAFVSIAPLASRCCVHKSFVS) directs the protein to the chloroplast. Mg(2+)-binding residues include aspartate 378, aspartate 382, and glutamate 530. The short motif at 378 to 382 (DDIYD) is the DDXXD motif element.

Belongs to the terpene synthase family. Tpsd subfamily. Mg(2+) is required as a cofactor. Mn(2+) serves as cofactor.

The protein resides in the plastid. Its subcellular location is the chloroplast. The enzyme catalyses (2E)-geranyl diphosphate + H2O = (R)-linalool + diphosphate. It functions in the pathway terpene metabolism; oleoresin biosynthesis. Terpene synthase (TPS) involved in the biosynthesis of monoterpene natural products included in conifer oleoresin secretions and volatile emissions; these compounds contribute to biotic and abiotic stress defense against herbivores and pathogens. Catalyzes the conversion of (2E)-geranyl diphosphate (GPP) to (R)-linalool. In Picea sitchensis (Sitka spruce), this protein is (R)-linalool synthase 1, chloroplastic.